Consider the following 274-residue polypeptide: MPVAEEFQASWADEVEIDQGVLPPPSEVVENGLKIVTEYKYDNDNKKVKIVRTYKIEKRVVSKSIAKRKTWSKFGDSASDKPGPNPATTNVAEDVFMQFITSKEESQRPDDGELDGLKPPSSNVIFKCRTCQGDHLTLYCPFKHTQIAQAKTAEAAKAAEAKVAASNKYIPPSSAGRIPGRDQPPVSREDVTAIRISNLSNFAVEADIDDLVKGFGPVHKLYLAKEKSTGHCKGFAYVHFKFRADAAKAIQSLNGHGYDHLILNVEWSKPPQNN.

One can recognise an RRM domain in the interval 192 to 270 (TAIRISNLSN…LILNVEWSKP (79 aa)).

It belongs to the eIF-3 subunit G family. As to quaternary structure, component of the eukaryotic translation initiation factor 3 (eIF-3) complex.

Its subcellular location is the cytoplasm. RNA-binding component of the eukaryotic translation initiation factor 3 (eIF-3) complex, which is involved in protein synthesis of a specialized repertoire of mRNAs and, together with other initiation factors, stimulates binding of mRNA and methionyl-tRNAi to the 40S ribosome. The eIF-3 complex specifically targets and initiates translation of a subset of mRNAs involved in cell proliferation. This subunit can bind 18S rRNA. This Bombyx mori (Silk moth) protein is Eukaryotic translation initiation factor 3 subunit G.